Here is a 110-residue protein sequence, read N- to C-terminus: Large ribosomal subunit protein uL24 (110 aa).

It belongs to the universal ribosomal protein uL24 family. Part of the 50S ribosomal subunit.

In terms of biological role, one of two assembly initiator proteins, it binds directly to the 5'-end of the 23S rRNA, where it nucleates assembly of the 50S subunit. One of the proteins that surrounds the polypeptide exit tunnel on the outside of the subunit. This chain is Large ribosomal subunit protein uL24, found in Roseiflexus castenholzii (strain DSM 13941 / HLO8).